A 931-amino-acid polypeptide reads, in one-letter code: Up-regulator of cell proliferation (931 aa).

Ser3 bears the Phosphoserine mark. One can recognise a VLIG-type G domain in the interval 689–929; the sequence is RSRLVVLSTV…NIQQLIELVR (241 aa).

The protein belongs to the TRAFAC class dynamin-like GTPase superfamily. Very large inducible GTPase (VLIG) family. As to expression, strongly expressed in hepatitis B virus-infected liver and in HCC cells. Also highly expressed in well-differentiated gastric cancer tissues and various gastric cancer cell lines.

It localises to the cytoplasm. The protein resides in the nucleus. In terms of biological role, may be involved in cell cycle progression through the regulation of cyclin D1 expression. May participate in the development of hepatocellular carcinoma (HCC) by promoting hepatocellular growth and survival. May play an important role in development of gastric cancer. This Homo sapiens (Human) protein is Up-regulator of cell proliferation (URGCP).